Consider the following 204-residue polypeptide: N-(5'-phosphoribosyl)anthranilate isomerase (204 aa).

The protein belongs to the TrpF family.

It carries out the reaction N-(5-phospho-beta-D-ribosyl)anthranilate = 1-(2-carboxyphenylamino)-1-deoxy-D-ribulose 5-phosphate. The protein operates within amino-acid biosynthesis; L-tryptophan biosynthesis; L-tryptophan from chorismate: step 3/5. This chain is N-(5'-phosphoribosyl)anthranilate isomerase, found in Bacillus cereus (strain B4264).